Here is a 475-residue protein sequence, read N- to C-terminus: Zinc-regulated GTPase metalloprotein activator 1 (475 aa).

50-57 is a binding site for GTP; that stretch reads GFLGSGKT. Zn(2+)-binding residues include cysteine 116, cysteine 118, and cysteine 119. Positions 116–119 match the CXCC motif motif; that stretch reads CICC. GTP is bound by residues 119 to 123 and 229 to 232; these read CTMRE and NKCD. The 119-residue stretch at 302-420 folds into the CobW C-terminal domain; it reads IKSFIYKARR…LIESELNNCL (119 aa). The stretch at 440 to 467 forms a coiled coil; it reads IQLDEELEEEELEEEEEEGEYKDEIEMK. Positions 445–460 are enriched in acidic residues; that stretch reads ELEEEELEEEEEEGEY. The interval 445-475 is disordered; that stretch reads ELEEEELEEEEEEGEYKDEIEMKVDGSKFKK. Positions 461 to 475 are enriched in basic and acidic residues; that stretch reads KDEIEMKVDGSKFKK.

The protein belongs to the SIMIBI class G3E GTPase family. ZNG1 subfamily.

The enzyme catalyses GTP + H2O = GDP + phosphate + H(+). Zinc chaperone that directly transfers zinc cofactor to target metalloproteins, thereby activating them. Zinc is transferred from the CXCC motif in the GTPase domain to the zinc binding site in target proteins in a process requiring GTP hydrolysis. This Dictyostelium discoideum (Social amoeba) protein is Zinc-regulated GTPase metalloprotein activator 1.